A 61-amino-acid polypeptide reads, in one-letter code: Potassium channel toxin alpha-KTx 6.6 (61 aa).

An N-terminal signal peptide occupies residues 1–23 (MNAKFILLLLVVATTMLLPDTQG). 4 disulfide bridges follow: C29–C50, C35–C55, C39–C57, and C45–C60. C60 bears the Cysteine amide mark.

It belongs to the short scorpion toxin superfamily. Potassium channel inhibitor family. Alpha-KTx 06 subfamily. As to expression, expressed by the venom gland.

The protein resides in the secreted. Its function is as follows. Blocker of voltage-gated potassium channels. The protein is Potassium channel toxin alpha-KTx 6.6 of Opistophthalmus carinatus (African yellow leg scorpion).